A 192-amino-acid chain; its full sequence is UPF0149 protein KPN78578_32810 (192 aa).

This sequence belongs to the UPF0149 family.

This chain is UPF0149 protein KPN78578_32810, found in Klebsiella pneumoniae subsp. pneumoniae (strain ATCC 700721 / MGH 78578).